A 233-amino-acid chain; its full sequence is uncharacterized protein (233 aa).

This sequence belongs to the asfivirus H233R family.

This is an uncharacterized protein from African swine fever virus (isolate Warthog/Namibia/Wart80/1980) (ASFV).